A 205-amino-acid chain; its full sequence is Quinone-oxidoreductase QR2 (205 aa).

Residues 5-192 (VYIVYYSTYG…LKQAFHQGMY (188 aa)) enclose the Flavodoxin-like domain. FMN is bound by residues 11-15 (STYGH), 112-165 (IFFS…SPYG), and H136. Y13 contributes to the NAD(+) binding site.

It belongs to the WrbA family. FMN is required as a cofactor.

It carries out the reaction a quinone + NADH + H(+) = a quinol + NAD(+). The enzyme catalyses a quinone + NADPH + H(+) = a quinol + NADP(+). With respect to regulation, inhibited by dicumarol. Functionally, NAD(P)H:quinone oxidoreductase reducing quinones by a two-electron transfer mechanism. Can use either NADPH or NADH as electron donor. Can use menadione, 5-hydroxy-1,4-naphthoquinone (juglone) and 2,6-dimethoxy-p-benzoquinone (DMBQ) as substrates. Mitigates the toxicity of exogenous quinones in the rhizosphere. The protein is Quinone-oxidoreductase QR2 of Triphysaria versicolor (Yellow owl's clover).